A 673-amino-acid polypeptide reads, in one-letter code: Ribonucleoprotein PTB-binding 2 (673 aa).

Positions M1–P17 are enriched in gly residues. The tract at residues M1–E34 is disordered. Residues S18–A29 are compositionally biased toward low complexity. RRM domains are found at residues R58 to T129, A131 to V209, and K220 to P298. Positions Q481–Q549 are disordered. The span at S499 to S512 shows a compositional bias: low complexity. A compositionally biased stretch (polar residues) spans T529–Q549.

As to quaternary structure, interacts with PTBP1 and RAVER1. As to expression, expressed throughout embryogenesis. Detected at low levels in adult lung, brain and kidney, but not in the other tissues tested.

The protein resides in the nucleus. The protein localises to the cytoplasm. In terms of biological role, may bind single-stranded nucleic acids. The protein is Ribonucleoprotein PTB-binding 2 (Raver2) of Mus musculus (Mouse).